Reading from the N-terminus, the 82-residue chain is Cytochrome b559 subunit alpha (82 aa).

A helical transmembrane segment spans residues 22–36 (VIHAVTLPSIFLAGF). His-24 is a heme binding site.

Belongs to the PsbE/PsbF family. As to quaternary structure, heterodimer of an alpha subunit and a beta subunit. PSII is composed of 1 copy each of membrane proteins PsbA, PsbB, PsbC, PsbD, PsbE, PsbF, PsbH, PsbI, PsbJ, PsbK, PsbL, PsbM, PsbT, PsbX, PsbY, PsbZ, Psb30/Ycf12, peripheral proteins PsbO, CyanoQ (PsbQ), PsbU, PsbV and a large number of cofactors. It forms dimeric complexes. Heme b is required as a cofactor.

It localises to the cellular thylakoid membrane. Its function is as follows. This b-type cytochrome is tightly associated with the reaction center of photosystem II (PSII). PSII is a light-driven water:plastoquinone oxidoreductase that uses light energy to abstract electrons from H(2)O, generating O(2) and a proton gradient subsequently used for ATP formation. It consists of a core antenna complex that captures photons, and an electron transfer chain that converts photonic excitation into a charge separation. The sequence is that of Cytochrome b559 subunit alpha from Synechococcus sp. (strain CC9605).